We begin with the raw amino-acid sequence, 277 residues long: Phosphatidylserine decarboxylase proenzyme (277 aa).

Catalysis depends on charge relay system; for autoendoproteolytic cleavage activity residues D88, H144, and S242. Catalysis depends on S242, which acts as the Schiff-base intermediate with substrate; via pyruvic acid; for decarboxylase activity. The residue at position 242 (S242) is a Pyruvic acid (Ser); by autocatalysis.

The protein belongs to the phosphatidylserine decarboxylase family. PSD-B subfamily. Prokaryotic type I sub-subfamily. Heterodimer of a large membrane-associated beta subunit and a small pyruvoyl-containing alpha subunit. The cofactor is pyruvate. Post-translationally, is synthesized initially as an inactive proenzyme. Formation of the active enzyme involves a self-maturation process in which the active site pyruvoyl group is generated from an internal serine residue via an autocatalytic post-translational modification. Two non-identical subunits are generated from the proenzyme in this reaction, and the pyruvate is formed at the N-terminus of the alpha chain, which is derived from the carboxyl end of the proenzyme. The autoendoproteolytic cleavage occurs by a canonical serine protease mechanism, in which the side chain hydroxyl group of the serine supplies its oxygen atom to form the C-terminus of the beta chain, while the remainder of the serine residue undergoes an oxidative deamination to produce ammonia and the pyruvoyl prosthetic group on the alpha chain. During this reaction, the Ser that is part of the protease active site of the proenzyme becomes the pyruvoyl prosthetic group, which constitutes an essential element of the active site of the mature decarboxylase.

The protein resides in the cell membrane. The enzyme catalyses a 1,2-diacyl-sn-glycero-3-phospho-L-serine + H(+) = a 1,2-diacyl-sn-glycero-3-phosphoethanolamine + CO2. It participates in phospholipid metabolism; phosphatidylethanolamine biosynthesis; phosphatidylethanolamine from CDP-diacylglycerol: step 2/2. Its function is as follows. Catalyzes the formation of phosphatidylethanolamine (PtdEtn) from phosphatidylserine (PtdSer). The chain is Phosphatidylserine decarboxylase proenzyme from Psychrobacter arcticus (strain DSM 17307 / VKM B-2377 / 273-4).